The chain runs to 254 residues: Glutamate racemase (254 aa).

Residues D7–S8 and Y39–G40 contribute to the substrate site. The Proton donor/acceptor role is filled by C70. Residues N71 to T72 and E147 each bind substrate. C178 serves as the catalytic Proton donor/acceptor. T179–H180 contacts substrate.

It belongs to the aspartate/glutamate racemases family. As to quaternary structure, homodimer.

It catalyses the reaction L-glutamate = D-glutamate. The protein operates within cell wall biogenesis; peptidoglycan biosynthesis. Functionally, provides the (R)-glutamate required for cell wall biosynthesis. Converts L- or D-glutamate to D- or L-glutamate, respectively, but not other amino acids such as alanine, aspartate, and glutamine. The polypeptide is Glutamate racemase (Aquifex pyrophilus).